A 610-amino-acid polypeptide reads, in one-letter code: DNA mismatch repair protein MutL (610 aa).

Belongs to the DNA mismatch repair MutL/HexB family.

In terms of biological role, this protein is involved in the repair of mismatches in DNA. It is required for dam-dependent methyl-directed DNA mismatch repair. May act as a 'molecular matchmaker', a protein that promotes the formation of a stable complex between two or more DNA-binding proteins in an ATP-dependent manner without itself being part of a final effector complex. This Rickettsia rickettsii (strain Sheila Smith) protein is DNA mismatch repair protein MutL.